A 105-amino-acid chain; its full sequence is Iron-sulfur cluster assembly protein CyaY (105 aa).

It belongs to the frataxin family.

Involved in iron-sulfur (Fe-S) cluster assembly. May act as a regulator of Fe-S biogenesis. The protein is Iron-sulfur cluster assembly protein CyaY of Paraburkholderia xenovorans (strain LB400).